We begin with the raw amino-acid sequence, 373 residues long: Transcription factor SPATULA (373 aa).

Over residues 1-21 (MISQREEREEKKQRVMGDKKL) the composition is skewed to basic and acidic residues. 2 disordered regions span residues 1 to 46 (MISQ…PSSS) and 141 to 210 (VQGN…KRRR). Residues 141 to 160 (VQGNSSGTRVSSSSVGASGN) show a composition bias toward low complexity. Over residues 161 to 177 (ETDEYDCESEEGGEAVV) the composition is skewed to acidic residues. Over residues 182 to 191 (SSKSGPSSRS) the composition is skewed to low complexity. Over residues 197 to 210 (RAAEVHNLSEKRRR) the composition is skewed to basic and acidic residues. One can recognise a bHLH domain in the interval 197-246 (RAAEVHNLSEKRRRSRINEKMKALQSLIPNSNKTDKASMLDEAIEYLKQL).

As to quaternary structure, homodimer. Interacts with HEC1, HEC2 and HEC3. Binds to RGL2 and RGA. Expressed in lateral root caps, young leaves, stipules, maturing pith cells of the stem, differentiating vascular cells, shoot apical meristems and flowers.

Its subcellular location is the nucleus. Functionally, transcription factor that plays a role in floral organogenesis. Promotes the growth of carpel margins and of pollen tract tissues derived from them. In Arabidopsis thaliana (Mouse-ear cress), this protein is Transcription factor SPATULA (SPT).